We begin with the raw amino-acid sequence, 516 residues long: 3-phosphoshikimate 1-carboxyvinyltransferase, chloroplastic (516 aa).

The N-terminal 72 residues, Met-1–Gln-72, are a transit peptide targeting the chloroplast. Lys-95, Ser-96, and Arg-100 together coordinate 3-phosphoshikimate. Position 95 (Lys-95) interacts with phosphoenolpyruvate. The phosphoenolpyruvate site is built by Gly-173 and Arg-203. Positions 250, 251, 252, 278, 403, and 430 each coordinate 3-phosphoshikimate. Phosphoenolpyruvate is bound at residue Gln-252. Asp-403 serves as the catalytic Proton acceptor. Arg-434, Arg-476, and Lys-501 together coordinate phosphoenolpyruvate.

Belongs to the EPSP synthase family. In terms of tissue distribution, mostly expressed in flower petals, and, to a lower extent, in roots, stems and anthers, but barely in leaves.

Its subcellular location is the plastid. The protein resides in the chloroplast. It catalyses the reaction 3-phosphoshikimate + phosphoenolpyruvate = 5-O-(1-carboxyvinyl)-3-phosphoshikimate + phosphate. The protein operates within metabolic intermediate biosynthesis; chorismate biosynthesis; chorismate from D-erythrose 4-phosphate and phosphoenolpyruvate: step 6/7. Competitively inhibited by glyphosate. Functionally, catalyzes the transfer of the enolpyruvyl moiety of phosphoenolpyruvate (PEP) to the 5-hydroxyl of shikimate-3-phosphate (S3P) to produce enolpyruvyl shikimate-3-phosphate and inorganic phosphate. Involved in the accumulation of volatile benzoides in flowers, scent attracting pollinators (e.g. the night-active hawkmoth pollinator Manduca sexta). The polypeptide is 3-phosphoshikimate 1-carboxyvinyltransferase, chloroplastic (Petunia hybrida (Petunia)).